Here is a 340-residue protein sequence, read N- to C-terminus: Probable quinone oxidoreductase (340 aa).

This sequence belongs to the zinc-containing alcohol dehydrogenase family. Quinone oxidoreductase subfamily.

It carries out the reaction 2 a quinone + NADPH + H(+) = 2 a 1,4-benzosemiquinone + NADP(+). The sequence is that of Probable quinone oxidoreductase from Leishmania amazonensis.